Reading from the N-terminus, the 87-residue chain is Small ribosomal subunit protein bS16c (87 aa).

Belongs to the bacterial ribosomal protein bS16 family.

The protein localises to the plastid. Its subcellular location is the chloroplast. This is Small ribosomal subunit protein bS16c from Zygnema circumcarinatum (Green alga).